The primary structure comprises 183 residues: UPF0397 protein VSAL_I1988 (183 aa).

Transmembrane regions (helical) follow at residues 8–28, 41–61, 74–94, 110–130, and 147–167; these read VVVI…MFGI, AVLA…VGFI, VWLT…LFPI, FFIF…TSAF, and LCII…FILT.

It belongs to the UPF0397 family.

The protein resides in the cell membrane. The protein is UPF0397 protein VSAL_I1988 of Aliivibrio salmonicida (strain LFI1238) (Vibrio salmonicida (strain LFI1238)).